The sequence spans 337 residues: Transcription factor HBI1 (337 aa).

Positions 119–180 (VALKNKRKPE…SKGASENQKL (62 aa)) are disordered. Residues 126 to 151 (KPEVKTREEQKTEKKIKVEAETESSM) are compositionally biased toward basic and acidic residues. The span at 152-165 (KGKSNMGNTEASSD) shows a compositional bias: polar residues. One can recognise a bHLH domain in the interval 191–241 (QATDRHSLAERARREKISKKMKYLQDIVPGCNKVTGKAGMLDEIINYVQCL).

In terms of assembly, homodimer. Interacts with IBH1. In terms of tissue distribution, highly expressed in hypocotyls and cotyledons. Expressed in leaves, stems, and flowers.

The protein localises to the nucleus. In terms of biological role, atypical bHLH transcription factor that acts as a positive regulator of cell elongation downstream of multiple external and endogenous signals by direct binding to the promoters and activation of the two expansin genes EXPA1 and EXPA8, encoding cell wall loosening enzymes. Transcriptional activity is inhibited when binding to the bHLH transcription factor IBH1. The sequence is that of Transcription factor HBI1 (HBI1) from Arabidopsis thaliana (Mouse-ear cress).